A 539-amino-acid chain; its full sequence is Putative cysteine ligase BshC (539 aa).

A coiled-coil region spans residues 249–270 (VETNDEVTNRLNESQAAMKRAG).

Belongs to the BshC family.

Functionally, involved in bacillithiol (BSH) biosynthesis. May catalyze the last step of the pathway, the addition of cysteine to glucosamine malate (GlcN-Mal) to generate BSH. The chain is Putative cysteine ligase BshC from Bacillus pumilus (strain SAFR-032).